Here is a 24-residue protein sequence, read N- to C-terminus: Small ribosomal subunit protein uS5 (24 aa).

Belongs to the universal ribosomal protein uS5 family. In terms of assembly, part of the 30S ribosomal subunit. Contacts proteins S4 and S8.

Functionally, with S4 and S12 plays an important role in translational accuracy. Its function is as follows. Located at the back of the 30S subunit body where it stabilizes the conformation of the head with respect to the body. The polypeptide is Small ribosomal subunit protein uS5 (rpsE) (Vibrio proteolyticus (Aeromonas proteolytica)).